Here is a 124-residue protein sequence, read N- to C-terminus: Small ribosomal subunit protein bS6 (124 aa).

The tract at residues 101 to 124 (IMMKEVQREEARKSAQSDAPAVAA) is disordered. A compositionally biased stretch (basic and acidic residues) spans 105 to 115 (EVQREEARKSA).

This sequence belongs to the bacterial ribosomal protein bS6 family.

Binds together with bS18 to 16S ribosomal RNA. The chain is Small ribosomal subunit protein bS6 from Polynucleobacter asymbioticus (strain DSM 18221 / CIP 109841 / QLW-P1DMWA-1) (Polynucleobacter necessarius subsp. asymbioticus).